Here is a 276-residue protein sequence, read N- to C-terminus: Putative translation initiation factor eIF-2B subunit 2-like (276 aa).

Belongs to the eIF-2B alpha/beta/delta subunits family. In terms of assembly, complex of two different subunits.

Catalyzes the exchange of initiation factor 2-bound GDP for GTP. This chain is Putative translation initiation factor eIF-2B subunit 2-like, found in Pyrococcus furiosus (strain ATCC 43587 / DSM 3638 / JCM 8422 / Vc1).